The chain runs to 421 residues: L-evernosamine nitrososynthase (421 aa).

It belongs to the acyl-CoA dehydrogenase family. Homotetramer. The cofactor is FAD.

It catalyses the reaction dTDP-beta-L-evernosamine + 2 NADPH + 2 O2 + H(+) = dTDP-2,3,6-trideoxy-3-C-methyl-4-O-methyl-3-nitroso-beta-L-arabino-hexopyranose + 2 NADP(+) + 3 H2O. It carries out the reaction dTDP-beta-L-evernosamine + NADPH + O2 = dTDP-N-hydroxy-beta-L-evernosamine + NADP(+) + H2O. The catalysed reaction is dTDP-N-hydroxy-beta-L-evernosamine + NADPH + O2 + H(+) = dTDP-2,3,6-trideoxy-3-C-methyl-4-O-methyl-3-nitroso-beta-L-arabino-hexopyranose + NADP(+) + 2 H2O. Its pathway is antibiotic biosynthesis. Functionally, nitrososynthase involved in the biosynthesis of everninomicin, a broad spectrum orthosomycin antibiotic. Catalyzes the double-oxidation of TDP-L-evernosamine to TDP-L-evernitrosose. The enzyme first oxidizes the substrate to a transient hydroxylamino intermediate, which is then further oxidized to nitroso sugar. The nitroso group is probably spontaneously oxidized giving TDP-L-evernitrose. In vitro, catalyzes the double-oxidation of TDP-L-epi-vancosamine to TDP-L-epi-vancosonitrose. Can also use biosynthetic progenitors of TDP-L-epi-vancosamine, but progenitors solely undergo single-oxidation reactions and terminate in the hydroxylamine oxidation state. This chain is L-evernosamine nitrososynthase, found in Micromonospora sp. (strain ATCC 39149 / NRRL 15099 / SCC 1413).